Reading from the N-terminus, the 263-residue chain is Glutamate 5-kinase (263 aa).

Lysine 15 is an ATP binding site. Substrate-binding residues include serine 55, aspartate 142, and asparagine 154. ATP is bound by residues 174-175 (SD) and 216-222 (TGGIETK).

Belongs to the glutamate 5-kinase family.

It is found in the cytoplasm. It catalyses the reaction L-glutamate + ATP = L-glutamyl 5-phosphate + ADP. The protein operates within amino-acid biosynthesis; L-proline biosynthesis; L-glutamate 5-semialdehyde from L-glutamate: step 1/2. Its function is as follows. Catalyzes the transfer of a phosphate group to glutamate to form L-glutamate 5-phosphate. The chain is Glutamate 5-kinase from Alkaliphilus oremlandii (strain OhILAs) (Clostridium oremlandii (strain OhILAs)).